We begin with the raw amino-acid sequence, 233 residues long: Ribose-5-phosphate isomerase A (233 aa).

Residues 28 to 31 (SGST), 83 to 86 (DGAD), and 96 to 99 (KGGG) each bind substrate. Glu105 functions as the Proton acceptor in the catalytic mechanism. A substrate-binding site is contributed by Lys123.

This sequence belongs to the ribose 5-phosphate isomerase family. Homodimer.

The catalysed reaction is aldehydo-D-ribose 5-phosphate = D-ribulose 5-phosphate. It participates in carbohydrate degradation; pentose phosphate pathway; D-ribose 5-phosphate from D-ribulose 5-phosphate (non-oxidative stage): step 1/1. Catalyzes the reversible conversion of ribose-5-phosphate to ribulose 5-phosphate. This Bartonella bacilliformis (strain ATCC 35685 / KC583 / Herrer 020/F12,63) protein is Ribose-5-phosphate isomerase A.